Consider the following 221-residue polypeptide: Large ribosomal subunit protein uL3 (221 aa).

The disordered stretch occupies residues 140–160; it reads GGPKTHGSGFHRHAGSIGMRS.

It belongs to the universal ribosomal protein uL3 family. Part of the 50S ribosomal subunit. Forms a cluster with proteins L14 and L19.

One of the primary rRNA binding proteins, it binds directly near the 3'-end of the 23S rRNA, where it nucleates assembly of the 50S subunit. The chain is Large ribosomal subunit protein uL3 from Chlamydia caviae (strain ATCC VR-813 / DSM 19441 / 03DC25 / GPIC) (Chlamydophila caviae).